We begin with the raw amino-acid sequence, 535 residues long: Cytochrome P450 monooxygenase claP (535 aa).

2 helical membrane-spanning segments follow: residues 7-27 (IGTL…KLVG) and 225-245 (YFSM…KLPT). Cysteine 472 lines the heme pocket.

Belongs to the cytochrome P450 family. Requires heme as cofactor.

The protein resides in the membrane. It functions in the pathway secondary metabolite biosynthesis; terpenoid biosynthesis. Functionally, cytochrome P450 monooxygenase; part of the gene cluster that mediates the biosynthesis of clavilactone A, a meroterpenoid that features a unique benzo-fused ten-membered carbocyclic ring unit with an alpha,beta-epoxy-gamma-lactone moiety, forming an intriguing 10/5/3 tricyclic nested skeleton. Cytochrome P450 monooxygenases claO, claP, claQ, claU, and claW are close orthologs, suggesting that a redundant function or pseudogenes are present in the cla cluster. These monoxygenases are not involved in clavilactone A biosynthesis nor its modification. ClaR, ClaS and ClaT are sufficient to produce clavilactone A. The biosynthesis begins with the prenyltransferase claS that transfers geranyl pyrophosphate (GPP) to hydroquinone to produces geranylhydroquinone. The cytochrome P450 monooxygenase claR then catalyzes the diradical coupling reaction between the intramolecular hydroquinone and allyl moieties to form the benzo-fused ten-membered carbocyclic ring unit of wigantol. Finally the cytochrome P450 monooxygenase claT exquisitely and stereoselectively assembles the alpha,beta-epoxy-gamma-lactone moiety, producing clavilactone A via arnebinol A. The chain is Cytochrome P450 monooxygenase claP from Ampulloclitocybe clavipes (Club foot).